The primary structure comprises 210 residues: MKKLTKLLSLTLLFALAGCHSVLDAPTEITQPSVTIPHNDAKWQQHLAQLTQINAYSAKGQFGYISPEERFSSHFDWQYKTPTNFGLTMSSNLSSKSLKLQRNVYGMTISDSEGRSRTEADVAMLMEEIIGVSFPIDQFAYWVKGQPEQQSNYVVNEKRQLAQFDYAVNGTLWKVRFVEYHEDRQPNLPKLIVLENGSQTLKIRIDHWAY.

A signal peptide spans 1–18 (MKKLTKLLSLTLLFALAG). Cysteine 19 carries the N-palmitoyl cysteine lipid modification. Cysteine 19 is lipidated: S-diacylglycerol cysteine.

It belongs to the LolB family. Monomer.

The protein resides in the cell outer membrane. In terms of biological role, plays a critical role in the incorporation of lipoproteins in the outer membrane after they are released by the LolA protein. This Glaesserella parasuis serovar 5 (strain SH0165) (Haemophilus parasuis) protein is Outer-membrane lipoprotein LolB.